A 312-amino-acid chain; its full sequence is Probable N-glycosylase/DNA lyase (312 aa).

The interval Met-1 to Pro-22 is disordered. The span at Thr-13–Pro-22 shows a compositional bias: polar residues. Lys-235 is an active-site residue.

Belongs to the type-1 OGG1 family.

The enzyme catalyses 2'-deoxyribonucleotide-(2'-deoxyribose 5'-phosphate)-2'-deoxyribonucleotide-DNA = a 3'-end 2'-deoxyribonucleotide-(2,3-dehydro-2,3-deoxyribose 5'-phosphate)-DNA + a 5'-end 5'-phospho-2'-deoxyribonucleoside-DNA + H(+). In terms of biological role, DNA repair enzyme that incises DNA at 8-oxoG residues. Excises 7,8-dihydro-8-oxoguanine and 2,6-diamino-4-hydroxy-5-N-methylformamidopyrimidine (FAPY) from damaged DNA. Has a beta-lyase activity that nicks DNA 3' to the lesion. In Methanothermobacter thermautotrophicus (strain ATCC 29096 / DSM 1053 / JCM 10044 / NBRC 100330 / Delta H) (Methanobacterium thermoautotrophicum), this protein is Probable N-glycosylase/DNA lyase.